A 235-amino-acid chain; its full sequence is Fibrillarin-like rRNA/tRNA 2'-O-methyltransferase (235 aa).

S-adenosyl-L-methionine contacts are provided by residues 91–92, 110–111, 137–138, and 157–160; these read TT, EF, DA, and DVAQ.

Belongs to the methyltransferase superfamily. Fibrillarin family. Interacts with nop5. Component of box C/D small ribonucleoprotein (sRNP) particles that contain rpl7ae, FlpA and nop5, plus a guide RNA.

Involved in pre-rRNA and tRNA processing. Utilizes the methyl donor S-adenosyl-L-methionine to catalyze the site-specific 2'-hydroxyl methylation of ribose moieties in rRNA and tRNA. Site specificity is provided by a guide RNA that base pairs with the substrate. Methylation occurs at a characteristic distance from the sequence involved in base pairing with the guide RNA. The sequence is that of Fibrillarin-like rRNA/tRNA 2'-O-methyltransferase from Pyrobaculum neutrophilum (strain DSM 2338 / JCM 9278 / NBRC 100436 / V24Sta) (Thermoproteus neutrophilus).